Consider the following 612-residue polypeptide: Elongation factor 4 (612 aa).

Residues 11–193 enclose the tr-type G domain; the sequence is KHIRNFSIVA…EIVKKVPAPD (183 aa). Residues 23–28 and 140–143 each bind GTP; these read DHGKST and NKID.

This sequence belongs to the TRAFAC class translation factor GTPase superfamily. Classic translation factor GTPase family. LepA subfamily.

Its subcellular location is the cell membrane. It catalyses the reaction GTP + H2O = GDP + phosphate + H(+). In terms of biological role, required for accurate and efficient protein synthesis under certain stress conditions. May act as a fidelity factor of the translation reaction, by catalyzing a one-codon backward translocation of tRNAs on improperly translocated ribosomes. Back-translocation proceeds from a post-translocation (POST) complex to a pre-translocation (PRE) complex, thus giving elongation factor G a second chance to translocate the tRNAs correctly. Binds to ribosomes in a GTP-dependent manner. The sequence is that of Elongation factor 4 from Lactobacillus johnsonii (strain CNCM I-12250 / La1 / NCC 533).